The primary structure comprises 349 residues: Homeobox-leucine zipper protein HOX7 (349 aa).

The segment at 42 to 186 (RATRRDEQDD…PKQKSDLANR (145 aa)) is disordered. Composition is skewed to polar residues over residues 89-99 (SAETGSANSEM) and 121-135 (SSPSSMQEASTRQQV). Positions 150–209 (GARKKLRLSKEQSSFLEDSFKEHSTLTPKQKSDLANRLNLRPRQVEVWFQNRRARTKLKQ) form a DNA-binding region, homeobox. Positions 167–183 (DSFKEHSTLTPKQKSDL) are enriched in basic and acidic residues. The leucine-zipper stretch occupies residues 208 to 252 (KQTEVDCEHLKRCCERLTRENRRLQREVAELRGALRTTTSSYPPL).

Belongs to the HD-ZIP homeobox family. Class II subfamily. In terms of assembly, homodimer. May form a heterodimer with HOX1, HOX2 or HOX3. In terms of tissue distribution, expressed in seedlings, roots, leaves, nodes, internodes, flowers and embryo.

The protein localises to the nucleus. Functionally, probable transcription factor that binds to the DNA sequence 5'-CAAT[GC]ATTG-3'. This chain is Homeobox-leucine zipper protein HOX7 (HOX7), found in Oryza sativa subsp. indica (Rice).